The chain runs to 299 residues: Probable alpha-L-glutamate ligase (299 aa).

The ATP-grasp domain maps to 112 to 294; the sequence is LQLLTEQGIA…IALQMIVHIE (183 aa). ATP is bound by residues lysine 148, 185-186, aspartate 194, and 218-220; these read DF and RAN. Mg(2+) contacts are provided by aspartate 255, glutamate 267, and asparagine 269. Mn(2+)-binding residues include aspartate 255, glutamate 267, and asparagine 269.

The protein belongs to the RimK family. It depends on Mg(2+) as a cofactor. Requires Mn(2+) as cofactor.

The protein is Probable alpha-L-glutamate ligase of Histophilus somni (strain 129Pt) (Haemophilus somnus).